Reading from the N-terminus, the 512-residue chain is Glutamate--tRNA ligase (512 aa).

Positions 11-21 match the 'HIGH' region motif; the sequence is PSPTGALHIGG. The short motif at 263–267 is the 'KMSKS' region element; it reads KLSKR. ATP is bound at residue Lys-266.

Belongs to the class-I aminoacyl-tRNA synthetase family. Glutamate--tRNA ligase type 1 subfamily. As to quaternary structure, monomer.

It localises to the cytoplasm. It catalyses the reaction tRNA(Glu) + L-glutamate + ATP = L-glutamyl-tRNA(Glu) + AMP + diphosphate. In terms of biological role, catalyzes the attachment of glutamate to tRNA(Glu) in a two-step reaction: glutamate is first activated by ATP to form Glu-AMP and then transferred to the acceptor end of tRNA(Glu). This is Glutamate--tRNA ligase from Amoebophilus asiaticus (strain 5a2).